The following is a 175-amino-acid chain: Gamma-crystallin B (175 aa).

2 consecutive Beta/gamma crystallin 'Greek key' domains span residues 2–40 and 41–83; these read GKIT…RVES and GCWM…CLIP. Residues 84–88 are connecting peptide; that stretch reads PHSGA. Beta/gamma crystallin 'Greek key' domains lie at 89 to 129 and 130 to 172; these read YRMK…NVLE and GSWI…RRVM.

It belongs to the beta/gamma-crystallin family. In terms of assembly, monomer.

Its function is as follows. Crystallins are the dominant structural components of the vertebrate eye lens. The protein is Gamma-crystallin B (CRYGB) of Homo sapiens (Human).